The chain runs to 265 residues: Small ribosomal subunit protein eS1 (265 aa).

Disordered stretches follow at residues 1–24 (MTQG…RTID) and 240–265 (HEKK…LLAQ). A compositionally biased stretch (basic and acidic residues) spans 240 to 253 (HEKKGEKATGRDGA).

Belongs to the eukaryotic ribosomal protein eS1 family. Component of the small ribosomal subunit. Mature ribosomes consist of a small (40S) and a large (60S) subunit. The 40S subunit contains about 33 different proteins and 1 molecule of RNA (18S). The 60S subunit contains about 49 different proteins and 3 molecules of RNA (25S, 5.8S and 5S).

The protein localises to the cytoplasm. The polypeptide is Small ribosomal subunit protein eS1 (Tetrahymena thermophila (strain SB210)).